The chain runs to 309 residues: Ribosomal RNA small subunit methyltransferase H (309 aa).

S-adenosyl-L-methionine contacts are provided by residues 36 to 38, Asp56, Phe82, Asp103, and Gln110; that span reads GGH.

The protein belongs to the methyltransferase superfamily. RsmH family.

It is found in the cytoplasm. It carries out the reaction cytidine(1402) in 16S rRNA + S-adenosyl-L-methionine = N(4)-methylcytidine(1402) in 16S rRNA + S-adenosyl-L-homocysteine + H(+). In terms of biological role, specifically methylates the N4 position of cytidine in position 1402 (C1402) of 16S rRNA. The sequence is that of Ribosomal RNA small subunit methyltransferase H from Hahella chejuensis (strain KCTC 2396).